A 257-amino-acid polypeptide reads, in one-letter code: Phosphomannomutase (257 aa).

The Nucleophile role is filled by D19. The Mg(2+) site is built by D19 and D21. The active-site Proton donor/acceptor is D21. Positions 28, 133, 144, 151, 189, and 191 each coordinate alpha-D-mannose 1-phosphate. Residues D219, F231, D233, and T236 each contribute to the Mg(2+) site.

This sequence belongs to the eukaryotic PMM family. Homodimer.

The protein resides in the cytoplasm. The enzyme catalyses alpha-D-mannose 1-phosphate = D-mannose 6-phosphate. It participates in nucleotide-sugar biosynthesis; GDP-alpha-D-mannose biosynthesis; alpha-D-mannose 1-phosphate from D-fructose 6-phosphate: step 2/2. Involved in the synthesis of the GDP-mannose and dolichol-phosphate-mannose required for a number of critical mannosyl transfer reactions. This Schizosaccharomyces pombe (strain 972 / ATCC 24843) (Fission yeast) protein is Phosphomannomutase (pmm1).